The primary structure comprises 239 residues: Ankyrin repeat domain-containing protein 49 (239 aa).

Residue Ser49 is modified to Phosphoserine. ANK repeat units lie at residues 73 to 103 (DPSR…HVNT), 107 to 136 (DEYT…DVHA), 140 to 169 (DGWT…DINA), and 173 to 206 (GLLT…GLKN).

In terms of tissue distribution, widely expressed in fetus, at a high level in fetal liver, brain and lung.

It is found in the nucleus. Its function is as follows. Induces HBG1 expression. May have a role in spermatogenesis where it promotes autophagy in response to serum starvation, via the NF-kappaB pathway. This chain is Ankyrin repeat domain-containing protein 49 (ANKRD49), found in Homo sapiens (Human).